Reading from the N-terminus, the 411-residue chain is MDFNELKNTDKDIYGIIEEEWERQKNGIELIASENFTSKSVMEAMGSFLTNKYAEGYPGKRYYGGCYIVDKAEDLARDRMKKLFNAEHVNVQPHSGSQANMAVYMSVLKPGDTVLGMSLNHGGHLTHGSKVSFSGKLYNFVSYGLNSDTEIIDYDEMRELALKHKPKMIVSGASAYPRKIDFKKIREICDEVGAYMMVDMAHIAGIIAAGRHESPVPYADFVTTTTHKTLRGPRGGAIICKEKYGAALDKTIFPGIQGGPLMHIIAAKAVCFGEALKDEYKEYIDQIIKNAKVFGEELVKYGFRLVSGGTDNHLLLVDLTNKNITGKDLEELLDKVNITVNKNAIPFDKLKPNVTSGIRVGTPAVTTRGFKEEEMKKVAYFINKAVENREGDLSAIKREVIELCEAFPLYE.

(6S)-5,6,7,8-tetrahydrofolate is bound by residues leucine 119 and glycine 123–leucine 125. Lysine 228 bears the N6-(pyridoxal phosphate)lysine mark.

This sequence belongs to the SHMT family. As to quaternary structure, homodimer. Requires pyridoxal 5'-phosphate as cofactor.

It localises to the cytoplasm. The enzyme catalyses (6R)-5,10-methylene-5,6,7,8-tetrahydrofolate + glycine + H2O = (6S)-5,6,7,8-tetrahydrofolate + L-serine. The protein operates within one-carbon metabolism; tetrahydrofolate interconversion. It participates in amino-acid biosynthesis; glycine biosynthesis; glycine from L-serine: step 1/1. Its function is as follows. Catalyzes the reversible interconversion of serine and glycine with tetrahydrofolate (THF) serving as the one-carbon carrier. This reaction serves as the major source of one-carbon groups required for the biosynthesis of purines, thymidylate, methionine, and other important biomolecules. Also exhibits THF-independent aldolase activity toward beta-hydroxyamino acids, producing glycine and aldehydes, via a retro-aldol mechanism. The chain is Serine hydroxymethyltransferase from Clostridium kluyveri (strain NBRC 12016).